A 327-amino-acid chain; its full sequence is Methionine import ATP-binding protein MetN (327 aa).

The region spanning 3–239 (VELKNIEKIY…PKHAVTKELL (237 aa)) is the ABC transporter domain. 36 to 43 (GYSGAGKS) is an ATP binding site.

Belongs to the ABC transporter superfamily. Methionine importer (TC 3.A.1.24) family. In terms of assembly, the complex is composed of two ATP-binding proteins (MetN), two transmembrane proteins (MetI) and a solute-binding protein (MetQ).

The protein localises to the cell inner membrane. The catalysed reaction is L-methionine(out) + ATP + H2O = L-methionine(in) + ADP + phosphate + H(+). The enzyme catalyses D-methionine(out) + ATP + H2O = D-methionine(in) + ADP + phosphate + H(+). Its function is as follows. Part of the ABC transporter complex MetNIQ involved in methionine import. Responsible for energy coupling to the transport system. The protein is Methionine import ATP-binding protein MetN of Helicobacter pylori (strain ATCC 700392 / 26695) (Campylobacter pylori).